Consider the following 83-residue polypeptide: Small ribosomal subunit protein bS16 (83 aa).

It belongs to the bacterial ribosomal protein bS16 family.

The protein is Small ribosomal subunit protein bS16 of Pseudoalteromonas atlantica (strain T6c / ATCC BAA-1087).